A 188-amino-acid polypeptide reads, in one-letter code: Phosphatidylinositol N-acetylglucosaminyltransferase subunit H (188 aa).

This sequence belongs to the PIGH family. Component of the glycosylphosphatidylinositol-N-acetylglucosaminyltransferase (GPI-GnT) complex composed at least by PIGA, PIGC, PIGH, PIGP, PIGQ, PIGY and DPM2. Interacts with PIGQ.

The protein resides in the cytoplasm. The protein operates within glycolipid biosynthesis; glycosylphosphatidylinositol-anchor biosynthesis. Functionally, part of the glycosylphosphatidylinositol-N-acetylglucosaminyltransferase (GPI-GnT) complex that catalyzes the transfer of N-acetylglucosamine from UDP-N-acetylglucosamine to phosphatidylinositol and participates in the first step of GPI biosynthesis. In Mus musculus (Mouse), this protein is Phosphatidylinositol N-acetylglucosaminyltransferase subunit H.